A 551-amino-acid chain; its full sequence is ATP synthase subunit alpha (551 aa).

Residue 174–181 coordinates ATP; sequence GDRQTGKT.

Belongs to the ATPase alpha/beta chains family. In terms of assembly, F-type ATPases have 2 components, CF(1) - the catalytic core - and CF(0) - the membrane proton channel. CF(1) has five subunits: alpha(3), beta(3), gamma(1), delta(1), epsilon(1). CF(0) has three main subunits: a(1), b(2) and c(9-12). The alpha and beta chains form an alternating ring which encloses part of the gamma chain. CF(1) is attached to CF(0) by a central stalk formed by the gamma and epsilon chains, while a peripheral stalk is formed by the delta and b chains.

The protein resides in the cell inner membrane. The enzyme catalyses ATP + H2O + 4 H(+)(in) = ADP + phosphate + 5 H(+)(out). Functionally, produces ATP from ADP in the presence of a proton gradient across the membrane. The alpha chain is a regulatory subunit. The chain is ATP synthase subunit alpha from Salinibacter ruber (strain DSM 13855 / M31).